A 291-amino-acid polypeptide reads, in one-letter code: Pirin (291 aa).

Fe cation-binding residues include His56, His58, His101, and Glu103.

This sequence belongs to the pirin family. In terms of assembly, may interact with NF1/CTF1. Interacts with BCL3. Identified in a complex comprised of PIR, BLC3, NFKB1 and target DNA. It depends on Fe cation as a cofactor.

It localises to the nucleus. It is found in the cytoplasm. The enzyme catalyses quercetin + O2 = 2-(3,4-dihydroxybenzoyloxy)-4,6-dihydroxybenzoate + CO. It functions in the pathway flavonoid metabolism; quercetin degradation. Transcriptional coregulator of NF-kappa-B which facilitates binding of NF-kappa-B proteins to target kappa-B genes in a redox-state-dependent manner. May be required for efficient terminal myeloid maturation of hematopoietic cells. Has quercetin 2,3-dioxygenase activity (in vitro). The sequence is that of Pirin (Pir) from Rattus norvegicus (Rat).